The primary structure comprises 585 residues: Capsid vertex component 2 (585 aa).

Residues 1 to 49 (MDPYYPFDALDVWEHRRFIVADSRSFITPEFPRDFWMLPVFNIPRETAA) form an interaction with major capsid protein/MCP region. A disordered region spans residues 109 to 138 (EEADAARDAEARGEGAADGAAPSPTAGPAA). Residues 112–123 (DAARDAEARGEG) are compositionally biased toward basic and acidic residues. Positions 125-138 (ADGAAPSPTAGPAA) are enriched in low complexity.

The protein belongs to the herpesviridae CVC2 protein family. In terms of assembly, heterodimerizes with CVC1. Interacts with major capsid protein/MCP and triplex capsid protein 1/TRX1 at the pentamer vertices. Interacts with the large tegument protein/LTP.

It localises to the virion. The protein resides in the host nucleus. Its function is as follows. Capsid vertex-specific component that plays a role during viral DNA encapsidation, assuring correct genome cleavage and presumably stabilizing capsids that contain full-length viral genomes. Participates in the interaction between the capsid and the tegument through interaction with the large tegument protein/LTP. The chain is Capsid vertex component 2 from Homo sapiens (Human).